We begin with the raw amino-acid sequence, 335 residues long: Dihydroorotate dehydrogenase (quinone) (335 aa).

FMN contacts are provided by residues 59 to 63 (AGLDK) and T83. K63 provides a ligand contact to substrate. Residue 108–112 (NRMGF) coordinates substrate. Positions 136 and 169 each coordinate FMN. N169 provides a ligand contact to substrate. Residue S172 is the Nucleophile of the active site. N174 contacts substrate. Residues K214 and T242 each contribute to the FMN site. Residue 243–244 (NT) coordinates substrate. FMN is bound by residues G265, G294, and 315–316 (YS).

It belongs to the dihydroorotate dehydrogenase family. Type 2 subfamily. As to quaternary structure, monomer. FMN is required as a cofactor.

The protein resides in the cell membrane. The catalysed reaction is (S)-dihydroorotate + a quinone = orotate + a quinol. It participates in pyrimidine metabolism; UMP biosynthesis via de novo pathway; orotate from (S)-dihydroorotate (quinone route): step 1/1. Catalyzes the conversion of dihydroorotate to orotate with quinone as electron acceptor. The sequence is that of Dihydroorotate dehydrogenase (quinone) from Neisseria meningitidis serogroup A / serotype 4A (strain DSM 15465 / Z2491).